The sequence spans 725 residues: Ribosomal RNA large subunit methyltransferase K/L (725 aa).

The 112-residue stretch at 46–157 (VAYRLCLWSR…RGQATLSLDL (112 aa)) folds into the THUMP domain. Positions 393 to 412 (TGERGERNDDGQARAPSEPA) are disordered. The segment covering 395 to 404 (ERGERNDDGQ) has biased composition (basic and acidic residues).

The protein belongs to the methyltransferase superfamily. RlmKL family.

Its subcellular location is the cytoplasm. It catalyses the reaction guanosine(2445) in 23S rRNA + S-adenosyl-L-methionine = N(2)-methylguanosine(2445) in 23S rRNA + S-adenosyl-L-homocysteine + H(+). The catalysed reaction is guanosine(2069) in 23S rRNA + S-adenosyl-L-methionine = N(2)-methylguanosine(2069) in 23S rRNA + S-adenosyl-L-homocysteine + H(+). In terms of biological role, specifically methylates the guanine in position 2445 (m2G2445) and the guanine in position 2069 (m7G2069) of 23S rRNA. The polypeptide is Ribosomal RNA large subunit methyltransferase K/L (Pseudomonas paraeruginosa (strain DSM 24068 / PA7) (Pseudomonas aeruginosa (strain PA7))).